Here is a 475-residue protein sequence, read N- to C-terminus: Ankyrin repeat, SAM and basic leucine zipper domain-containing protein 1 (475 aa).

Low complexity predominate over residues 1–10 (MAAGALRGLA). The tract at residues 1–23 (MAAGALRGLAVAGGGESSESEDD) is disordered. Residues Ser17, Ser18, and Ser20 each carry the phosphoserine modification. 6 ANK repeats span residues 45 to 74 (EKNE…SVDS), 78 to 107 (YGWT…NASF), 110 to 144 (DKQT…DPNV), 148 to 177 (RLMT…EVNT), 181 to 210 (NGYT…NKML), and 214 to 243 (DGKI…PLEG). An SAM domain is found at 272-334 (SYTAFGDLEI…KILSALKELE (63 aa)).

Interacts with DDX4, PIWIL1, RANBP9 and TDRD1.

It localises to the cytoplasm. In terms of biological role, plays a central role during spermatogenesis by repressing transposable elements and preventing their mobilization, which is essential for the germline integrity. Acts via the piRNA metabolic process, which mediates the repression of transposable elements during meiosis by forming complexes composed of piRNAs and Piwi proteins and governs the methylation and subsequent repression of transposons. Its association with pi-bodies suggests a participation in the primary piRNAs metabolic process. Required prior to the pachytene stage to facilitate the production of multiple types of piRNAs, including those associated with repeats involved in the regulation of retrotransposons. May act by mediating protein-protein interactions during germ cell maturation. The polypeptide is Ankyrin repeat, SAM and basic leucine zipper domain-containing protein 1 (ASZ1) (Otolemur garnettii (Small-eared galago)).